The chain runs to 56 residues: Small ribosomal subunit protein uS14 (56 aa).

Residues C21, C24, C39, and C42 each contribute to the Zn(2+) site.

Belongs to the universal ribosomal protein uS14 family. As to quaternary structure, component of the small ribosomal subunit. Mature ribosomes consist of a small (40S) and a large (60S) subunit. The 40S subunit contains about 32 different proteins and 1 molecule of RNA (18S). The 60S subunit contains 45 different proteins and 3 molecules of RNA (25S, 5.8S and 5S). It depends on Zn(2+) as a cofactor.

The protein resides in the cytoplasm. In terms of biological role, component of the ribosome, a large ribonucleoprotein complex responsible for the synthesis of proteins in the cell. The small ribosomal subunit (SSU) binds messenger RNAs (mRNAs) and translates the encoded message by selecting cognate aminoacyl-transfer RNA (tRNA) molecules. The large subunit (LSU) contains the ribosomal catalytic site termed the peptidyl transferase center (PTC), which catalyzes the formation of peptide bonds, thereby polymerizing the amino acids delivered by tRNAs into a polypeptide chain. The nascent polypeptides leave the ribosome through a tunnel in the LSU and interact with protein factors that function in enzymatic processing, targeting, and the membrane insertion of nascent chains at the exit of the ribosomal tunnel. The sequence is that of Small ribosomal subunit protein uS14 from Candida albicans (strain SC5314 / ATCC MYA-2876) (Yeast).